The chain runs to 961 residues: FYVE, RhoGEF and PH domain-containing protein 1 (961 aa).

The span at 1–11 (MHGHRAPGGAG) shows a compositional bias: gly residues. Positions 1 to 353 (MHGHRAPGGA…DEEEEEEKDR (353 aa)) are disordered. The segment covering 27-38 (PPACADSDPGAS) has biased composition (low complexity). A Phosphoserine modification is found at Ser-48. The segment covering 125–135 (PHPEGPQRLRS) has biased composition (basic and acidic residues). Composition is skewed to pro residues over residues 156–165 (GPKPQVPPKP) and 172–190 (RMPP…PLPA). The short motif at 171–187 (PRMPPPLEPIPPPPSRP) is the SH3-binding element. A compositionally biased stretch (low complexity) spans 199 to 213 (APRAEASPSSAAVSS). Phosphoserine is present on Ser-205. A compositionally biased stretch (pro residues) spans 231 to 255 (VPGPSPGPPEPVMLPQPTSQPPVPQ). Positions 273-284 (RDGEKVPNRDSG) are enriched in basic and acidic residues. Composition is skewed to low complexity over residues 285–294 (IDSISSPSNS) and 316–325 (ALASVPVALA). The span at 335–351 (VDSDLEEEDDEEEEEEK) shows a compositional bias: acidic residues. Residues 373 to 561 (KVFHIANELL…ATAAEHSNAA (189 aa)) form the DH domain. Positions 590-689 (ELIKEGHILK…WVQAINSTLL (100 aa)) constitute a PH 1 domain. Positions 702–726 (NSTNREDEDTPPNSPNVDLGKRAPT) are disordered. Phosphothreonine is present on Thr-711. Phosphoserine is present on Ser-715. The segment at 730–790 (EKEVTMCMRC…VCTDCYVALH (61 aa)) adopts an FYVE-type zinc-finger fold. 8 residues coordinate Zn(2+): Cys-736, Cys-739, Cys-753, Cys-756, Cys-761, Cys-764, Cys-782, and Cys-785. The 101-residue stretch at 821–921 (NSVICSFLHY…WMAVLGRAGR (101 aa)) folds into the PH 2 domain. The interval 925 to 961 (FCPGPTLSEDREMEEAPVAALGATAEPPESPQTRDKT) is disordered.

In terms of assembly, interacts with DBNL/ABP1 and CTTN. May interact with CCPG1. Binds CDC42. In terms of tissue distribution, expressed in fetal heart, brain, lung, kidney and placenta. Less expressed in liver; adult heart, brain, lung, pancreas and skeletal muscle.

The protein localises to the cytoplasm. It localises to the cell projection. Its subcellular location is the lamellipodium. It is found in the ruffle. The protein resides in the cytoskeleton. Its function is as follows. Activates CDC42, a member of the Ras-like family of Rho- and Rac proteins, by exchanging bound GDP for free GTP. Plays a role in regulating the actin cytoskeleton and cell shape. This is FYVE, RhoGEF and PH domain-containing protein 1 (FGD1) from Homo sapiens (Human).